We begin with the raw amino-acid sequence, 968 residues long: Phosphoenolpyruvate carboxylase (968 aa).

Ser-11 is modified (phosphoserine). Catalysis depends on residues His-172 and Lys-602.

Belongs to the PEPCase type 1 family. As to quaternary structure, homotetramer. The cofactor is Mg(2+).

It localises to the cytoplasm. It catalyses the reaction oxaloacetate + phosphate = phosphoenolpyruvate + hydrogencarbonate. By light-reversible phosphorylation. In terms of biological role, through the carboxylation of phosphoenolpyruvate (PEP) it forms oxaloacetate, a four-carbon dicarboxylic acid source for the tricarboxylic acid cycle. The chain is Phosphoenolpyruvate carboxylase from Phaseolus vulgaris (Kidney bean).